Consider the following 252-residue polypeptide: tRNA pseudouridine synthase A (252 aa).

D52 acts as the Nucleophile in catalysis. Y111 is a binding site for substrate.

It belongs to the tRNA pseudouridine synthase TruA family. In terms of assembly, homodimer.

It carries out the reaction uridine(38/39/40) in tRNA = pseudouridine(38/39/40) in tRNA. Formation of pseudouridine at positions 38, 39 and 40 in the anticodon stem and loop of transfer RNAs. This Methylorubrum populi (strain ATCC BAA-705 / NCIMB 13946 / BJ001) (Methylobacterium populi) protein is tRNA pseudouridine synthase A.